A 251-amino-acid polypeptide reads, in one-letter code: MRKPIIAGNWKMNKTLSEAVSFVEEVKGQIPAASAVDAVVCSPALFLERLVAATEGTDLQVGAQNMHFEKNGAFTGEISPVALSDLKVGYVVLGHSERREMFAETDESVNKKTIAAFEHGLTPIVCCGETLEERESGKTFDLVAGQVTKALAGLTEEQVKATVIAYEPIWAIGTGKSSSSADANEVCAHIRKVVAEAVSPAAAEAVRIQYGGSVKPENIKEYMAQSDIDGALVGGASLEPASFLGLLEAVK.

9 to 11 contacts substrate; sequence NWK. His-95 functions as the Electrophile in the catalytic mechanism. Glu-167 functions as the Proton acceptor in the catalytic mechanism. Residues Gly-173, Ser-213, and 234-235 each bind substrate; that span reads GG. A Phosphoserine modification is found at Ser-213.

It belongs to the triosephosphate isomerase family. As to quaternary structure, homodimer.

Its subcellular location is the cytoplasm. It catalyses the reaction D-glyceraldehyde 3-phosphate = dihydroxyacetone phosphate. Its pathway is carbohydrate biosynthesis; gluconeogenesis. It functions in the pathway carbohydrate degradation; glycolysis; D-glyceraldehyde 3-phosphate from glycerone phosphate: step 1/1. In terms of biological role, involved in the gluconeogenesis. Catalyzes stereospecifically the conversion of dihydroxyacetone phosphate (DHAP) to D-glyceraldehyde-3-phosphate (G3P). The chain is Triosephosphate isomerase from Bacillus cereus (strain ATCC 10987 / NRS 248).